Reading from the N-terminus, the 128-residue chain is Large ribosomal subunit protein bL12 (128 aa).

This sequence belongs to the bacterial ribosomal protein bL12 family. In terms of assembly, homodimer. Part of the ribosomal stalk of the 50S ribosomal subunit. Forms a multimeric L10(L12)X complex, where L10 forms an elongated spine to which 2 to 4 L12 dimers bind in a sequential fashion. Binds GTP-bound translation factors.

In terms of biological role, forms part of the ribosomal stalk which helps the ribosome interact with GTP-bound translation factors. Is thus essential for accurate translation. The polypeptide is Large ribosomal subunit protein bL12 (Corynebacterium glutamicum (strain R)).